Consider the following 593-residue polypeptide: Alanine--tRNA ligase (593 aa).

Zn(2+) is bound by residues H456, H460, C558, and H562.

Belongs to the class-II aminoacyl-tRNA synthetase family. It depends on Zn(2+) as a cofactor.

It is found in the cytoplasm. It catalyses the reaction tRNA(Ala) + L-alanine + ATP = L-alanyl-tRNA(Ala) + AMP + diphosphate. Its function is as follows. Catalyzes the attachment of alanine to tRNA(Ala) in a two-step reaction: alanine is first activated by ATP to form Ala-AMP and then transferred to the acceptor end of tRNA(Ala). Also edits incorrectly charged Ser-tRNA(Ala) and Gly-tRNA(Ala) via its editing domain. The protein is Alanine--tRNA ligase (alaS) of Borrelia hermsii (strain HS1 / DAH).